Here is a 186-residue protein sequence, read N- to C-terminus: Casparian strip membrane protein 3 (186 aa).

Residues 1-26 (MKGSSEHGETSKAAPLGRGGVSKGVS) lie on the Cytoplasmic side of the membrane. A helical transmembrane segment spans residues 27–47 (VLDLILRFIAIIGTLASAIAM). Residues 48 to 74 (GTTNETLPFFTQFIRFKAQYSDLPTLT) are Extracellular-facing. N51 is a glycosylation site (N-linked (GlcNAc...) asparagine). The helical transmembrane segment at 75-95 (FFVVANSIVCAYLILSLPLSI) threads the bilayer. The Cytoplasmic segment spans residues 96 to 107 (VHIIRSRAKYSR). Residues 108 to 128 (LLLIFLDAAMLALVTAGASAA) traverse the membrane as a helical segment. Residues 129–161 (AAIVYLAHKGNVRANWLAICQQFDSFCERISGS) are Extracellular-facing. The chain crosses the membrane as a helical span at residues 162–182 (LIGSFGAMVMLILLILLSAIA). Over 183–186 (LARR) the chain is Cytoplasmic.

The protein belongs to the Casparian strip membrane proteins (CASP) family. As to quaternary structure, homodimer and heterodimers.

The protein resides in the cell membrane. Regulates membrane-cell wall junctions and localized cell wall deposition. Required for establishment of the Casparian strip membrane domain (CSD) and the subsequent formation of Casparian strips, a cell wall modification of the root endodermis that determines an apoplastic barrier between the intraorganismal apoplasm and the extraorganismal apoplasm and prevents lateral diffusion. The polypeptide is Casparian strip membrane protein 3 (Sorghum bicolor (Sorghum)).